Here is a 247-residue protein sequence, read N- to C-terminus: tRNA uridine(34) hydroxylase (247 aa).

Residues 124 to 218 enclose the Rhodanese domain; it reads TKQNVILIDT…YLEDTHNKNN (95 aa). The Cysteine persulfide intermediate role is filled by Cys-178.

It belongs to the TrhO family.

The enzyme catalyses uridine(34) in tRNA + AH2 + O2 = 5-hydroxyuridine(34) in tRNA + A + H2O. Its function is as follows. Catalyzes oxygen-dependent 5-hydroxyuridine (ho5U) modification at position 34 in tRNAs. The protein is tRNA uridine(34) hydroxylase of Rickettsia prowazekii (strain Madrid E).